The following is a 126-amino-acid chain: Large ribosomal subunit protein bL12c (126 aa).

It belongs to the bacterial ribosomal protein bL12 family. As to quaternary structure, homodimer. Part of the ribosomal stalk of the 50S ribosomal subunit. Forms a multimeric L10(L12)X complex, where L10 forms an elongated spine to which 2 to 4 L12 dimers bind in a sequential fashion. Binds GTP-bound translation factors.

Its subcellular location is the plastid. It localises to the cyanelle. Forms part of the ribosomal stalk which helps the ribosome interact with GTP-bound translation factors. Is thus essential for accurate translation. This chain is Large ribosomal subunit protein bL12c, found in Cyanophora paradoxa.